Here is a 339-residue protein sequence, read N- to C-terminus: Dicamba O-demethylase, oxygenase component (339 aa).

A Rieske domain is found at 8-110; that stretch reads WYVAALPEEL…VVERDALIWI (103 aa). [2Fe-2S] cluster-binding residues include cysteine 48, histidine 50, cysteine 67, and histidine 70. Residues histidine 159 and histidine 164 each coordinate Fe cation. Residues asparagine 229, histidine 250, and tryptophan 284 each contribute to the 3,6-dichloro-2-methoxybenzoate site. Aspartate 293 contributes to the Fe cation binding site.

In terms of assembly, homotrimer. The dicamba O-demethylase multicomponent enzyme system is composed of an oxygenase component (DdmC) and an electron transfer component formed by a ferredoxin reductase (DdmA) and a ferredoxin (DdmB). In vitro, dicamba O-demethylase assays in which DdmA2 is substituted for DdmA1 demonstrate that the two enzymes possess nearly identical activities. Requires [2Fe-2S] cluster as cofactor.

It carries out the reaction 3,6-dichloro-2-methoxybenzoate + 2 reduced [2Fe-2S]-[ferredoxin] + O2 + 2 H(+) = 3,6-dichlorosalicylate + formaldehyde + 2 oxidized [2Fe-2S]-[ferredoxin] + H2O. With respect to regulation, activity enhanced by Fe(2+) and Mg(2+) ions. Functionally, component of the dicamba O-demethylase multicomponent enzyme system involved in the degradation of the herbicide dicamba. In vitro, catalyzes the O-demethylation of 2-methoxy-3,6-dichlorobenzoic acid (dicamba) to yield 3,6-dichlorosalicylic acid (DCSA) via an exocyclic monooxygenation. This Stenotrophomonas maltophilia (Pseudomonas maltophilia) protein is Dicamba O-demethylase, oxygenase component.